We begin with the raw amino-acid sequence, 113 residues long: U11-theraphotoxin-Hhn1m (113 aa).

The signal sequence occupies residues 1-21 (MNTVRGTFLLVFGLAASLGQA). Residues 22–74 (DKNENRREMQKKTEQGKSYLNFAENLLLQKLEELEAKLLEKHSKKSKNSRQKR) constitute a propeptide that is removed on maturation. 3 disulfide bridges follow: Cys75–Cys90, Cys82–Cys95, and Cys89–Cys110.

It belongs to the neurotoxin 14 (magi-1) family. 01 (HNTX-16) subfamily. Expressed by the venom gland.

It is found in the secreted. Its function is as follows. Probable ion channel inhibitor. The polypeptide is U11-theraphotoxin-Hhn1m (Cyriopagopus hainanus (Chinese bird spider)).